A 1960-amino-acid polypeptide reads, in one-letter code: Myosin-9 (1960 aa).

Ala-2 bears the N-acetylalanine mark. The mediates interaction with LIMCH1 stretch occupies residues 2–838 (AQQAADKYLY…RLFTKVKPLL (837 aa)). Lys-8 carries the post-translational modification N6-acetyllysine. A Phosphotyrosine modification is found at Tyr-11. The Myosin N-terminal SH3-like domain maps to 27-77 (AAKKLVWVPSDKSGFEPASLKEEVGEEAIVELVENGKKVKVNKDDIQKMNP). Residues 81–776 (SKVEDMAELT…VLAHLEEERD (696 aa)) form the Myosin motor domain. Lys-102 bears the N6-acetyllysine mark. 174–181 (GESGAGKT) contacts ATP. N6-acetyllysine is present on residues Lys-299, Lys-435, and Lys-613. At Ser-628 the chain carries Phosphoserine. Residues 654-676 (LAKLMATLRNTNPNFVRCIIPNH) are actin-binding. A Phosphotyrosine modification is found at Tyr-754. The IQ domain maps to 779-808 (ITDVIIGFQACCRGYLARKAFAKRQQQLTA). Positions 837-1926 (LLQVSRQEEE…LKNKLRRGDL (1090 aa)) form a coiled coil. Lys-850 is subject to N6-succinyllysine. An N6-acetyllysine mark is found at Lys-860, Lys-975, and Lys-1024. Over residues 1035-1055 (RLRREEKQRQELEKTRRKLEG) the composition is skewed to basic and acidic residues. The segment at 1035 to 1057 (RLRREEKQRQELEKTRRKLEGDS) is disordered. Phosphoserine is present on Ser-1114. The interval 1118-1137 (EDLESERASRNKAEKQKRDL) is disordered. Positions 1122 to 1137 (SERASRNKAEKQKRDL) are enriched in basic and acidic residues. An N6-acetyllysine mark is found at Lys-1234, Lys-1249, Lys-1357, Lys-1392, Lys-1404, Lys-1410, Lys-1459, and Lys-1638. Lys-1669 bears the N6-succinyllysine mark. Ser-1714 carries the phosphoserine modification. N6-acetyllysine is present on residues Lys-1793, Lys-1802, and Lys-1845. The segment at 1877–1960 (RQLEEAEEEA…ADGAEAKPAE (84 aa)) is disordered. The residue at position 1923 (Arg-1923) is an Omega-N-methylarginine. Ser-1943 carries the phosphoserine modification. Over residues 1948 to 1960 (DGKADGAEAKPAE) the composition is skewed to basic and acidic residues.

This sequence belongs to the TRAFAC class myosin-kinesin ATPase superfamily. Myosin family. Myosin is a hexameric protein that consists of 2 heavy chain subunits (MHC), 2 alkali light chain subunits (MLC) and 2 regulatory light chain subunits (MLC-2). Interacts with RASIP1. Interacts with DDR1. Interacts with PDLIM2. Interacts with SVIL. Interacts with HTRA3. Interacts with Myo7a. Interacts with CFAP95. Interacts with LIMCH1; independently of the integration of MYH9 into the myosin complex. Interacts with RAB3A. Interacts with ZBED4. Interacts with S100A4; this interaction increases cell motility. As to quaternary structure, (Microbial infection) Interacts with herpes simplex virus 1/HHV-1 envelope glycoprotein B. In terms of processing, ISGylated. Post-translationally, ubiquitination. As to expression, in the kidney, expressed in the glomeruli. Also expressed in leukocytes.

The protein resides in the cytoplasm. It localises to the cytoskeleton. The protein localises to the cell cortex. It is found in the cytoplasmic vesicle. Its subcellular location is the secretory vesicle. The protein resides in the cortical granule. It localises to the cell membrane. Cellular myosin that appears to play a role in cytokinesis, cell shape, and specialized functions such as secretion and capping. Required for cortical actin clearance prior to oocyte exocytosis. Promotes cell motility in conjunction with S100A4. During cell spreading, plays an important role in cytoskeleton reorganization, focal contact formation (in the margins but not the central part of spreading cells), and lamellipodial retraction; this function is mechanically antagonized by MYH10. Functionally, (Microbial infection) Acts as a receptor for herpes simplex virus 1/HHV-1 envelope glycoprotein B. This Homo sapiens (Human) protein is Myosin-9 (MYH9).